Reading from the N-terminus, the 613-residue chain is Sulfhydryl oxidase 1 (613 aa).

The signal sequence occupies residues 1 to 30; it reads MTGCGRRSGWLPPLRLLLLPLLLGGPGVGA. Positions 37–157 constitute a Thioredoxin domain; that stretch reads YSASDPLTLL…RERLIDALES (121 aa). Catalysis depends on nucleophile residues C71 and C74. 2 disulfides stabilise this stretch: C71-C74 and C102-C111. N131 and N244 each carry an N-linked (GlcNAc...) asparagine glycan. The cysteines at positions 394 and 406 are disulfide-linked. In terms of domain architecture, ERV/ALR sulfhydryl oxidase spans 397 to 504; the sequence is SESHFRGFPC…EDPQFPKVQW (108 aa). Positions 402, 409, and 413 each coordinate FAD. Phosphoserine is present on S427. Residues C450 and C453 are joined by a disulfide bond. FAD-binding positions include D452, H456, 479–486, K501, and W504; that span reads WTSHNRVN. An intrachain disulfide couples C510 to C513.

Belongs to the quiescin-sulfhydryl oxidase (QSOX) family. As to quaternary structure, monomer. The cofactor is FAD. In terms of processing, N-glycosylated. O-glycosylated on Thr and Ser residues. Detected in endometrium and in uterus glandular epithelial cells (at protein level). Expressed in testis, placenta, pancreas, lung, ovary, endometrium, but not in brain, liver and kidney tissues. Higher expression in epithelial cells.

The protein localises to the secreted. The catalysed reaction is 2 R'C(R)SH + O2 = R'C(R)S-S(R)CR' + H2O2. In terms of biological role, catalyzes the oxidation of sulfhydryl groups in peptide and protein thiols to disulfides with the reduction of oxygen to hydrogen peroxide. Plays a role in disulfide bond formation in a variety of extracellular proteins. In fibroblasts, required for normal incorporation of laminin into the extracellular matrix, and thereby for normal cell-cell adhesion and cell migration. This chain is Sulfhydryl oxidase 1 (QSOX1), found in Cavia porcellus (Guinea pig).